The chain runs to 117 residues: Antimicrobial peptide AmAMP1 (117 aa).

A signal peptide spans 1–25 (MPSIRVLFVLLAVILLFMEVKMTSA). A propeptide spanning residues 26–73 (ASIVKDVDEDETLENEDGEAMENSWPWHGVEDTSDYSDLSDLANSEKR) is cleaved from the precursor. Cystine bridges form between Cys-76-Cys-115, Cys-85-Cys-108, and Cys-94-Cys-112.

The protein belongs to the coral AMP family.

It localises to the secreted. Functionally, coral peptide that probably acts as an antimicrobial peptide in the surface mucous layer of planula larvae and likely also in adults. Shows moderate to high activity against some Gram-negative and Gram-positive bacteria (tested on E.coli, B.megaterium, S.aureus, E.aesturaii, B.algicola, Acinetobacter spec.). Does not show antibacterial activity against the coral pathogen V.coralliilyticus. In Acropora millepora (Staghorn coral), this protein is Antimicrobial peptide AmAMP1.